The chain runs to 565 residues: Proline--tRNA ligase (565 aa).

The protein belongs to the class-II aminoacyl-tRNA synthetase family. ProS type 1 subfamily. As to quaternary structure, homodimer.

Its subcellular location is the cytoplasm. The catalysed reaction is tRNA(Pro) + L-proline + ATP = L-prolyl-tRNA(Pro) + AMP + diphosphate. Functionally, catalyzes the attachment of proline to tRNA(Pro) in a two-step reaction: proline is first activated by ATP to form Pro-AMP and then transferred to the acceptor end of tRNA(Pro). As ProRS can inadvertently accommodate and process non-cognate amino acids such as alanine and cysteine, to avoid such errors it has two additional distinct editing activities against alanine. One activity is designated as 'pretransfer' editing and involves the tRNA(Pro)-independent hydrolysis of activated Ala-AMP. The other activity is designated 'posttransfer' editing and involves deacylation of mischarged Ala-tRNA(Pro). The misacylated Cys-tRNA(Pro) is not edited by ProRS. In Campylobacter lari (strain RM2100 / D67 / ATCC BAA-1060), this protein is Proline--tRNA ligase.